The chain runs to 459 residues: Ribulose bisphosphate carboxylase (459 aa).

Residue asparagine 111 coordinates substrate. Residue lysine 166 is the Proton acceptor of the active site. Lysine 168 lines the substrate pocket. 3 residues coordinate Mg(2+): lysine 191, aspartate 193, and glutamate 194. Lysine 191 carries the N6-carboxylysine modification. Histidine 287 acts as the Proton acceptor in catalysis. Residues arginine 288, histidine 321, and serine 368 each contribute to the substrate site.

Belongs to the RuBisCO large chain family. Type II subfamily. Homodimer. Mg(2+) serves as cofactor.

The catalysed reaction is 2 (2R)-3-phosphoglycerate + 2 H(+) = D-ribulose 1,5-bisphosphate + CO2 + H2O. The enzyme catalyses D-ribulose 1,5-bisphosphate + O2 = 2-phosphoglycolate + (2R)-3-phosphoglycerate + 2 H(+). In terms of biological role, ruBisCO catalyzes two reactions: the carboxylation of D-ribulose 1,5-bisphosphate, the primary event in carbon dioxide fixation, as well as the oxidative fragmentation of the pentose substrate. Both reactions occur simultaneously and in competition at the same active site. This is Ribulose bisphosphate carboxylase from Cereibacter sphaeroides (Rhodobacter sphaeroides).